Consider the following 776-residue polypeptide: Conserved oligomeric Golgi complex subunit 4 (776 aa).

Ser342 and Ser345 each carry phosphoserine.

Belongs to the COG4 family. In terms of assembly, component of the conserved oligomeric Golgi complex which is composed of eight different subunits and is required for normal Golgi morphology and localization.

It localises to the golgi apparatus membrane. In terms of biological role, required for normal Golgi function. In Drosophila melanogaster (Fruit fly), this protein is Conserved oligomeric Golgi complex subunit 4.